The sequence spans 192 residues: ADP-ribosylation factor-like protein 14 (192 aa).

The N-myristoyl glycine moiety is linked to residue glycine 2. Residues 20–27 (GLDSAGKS), 64–68 (DVGGQ), and 123–126 (NKQD) contribute to the GTP site.

This sequence belongs to the small GTPase superfamily. Arf family. As to quaternary structure, interacts with ARL14EP. In terms of tissue distribution, expressed in immature dendritic cells.

Its subcellular location is the cytoplasmic vesicle. In terms of biological role, GTPase that recruits MYO1E to MHC class II-containing vesicles via the effector protein ARL14EP and hence controls the movement of these vesicles along the actin cytoskeleton in dendritic cells. In Homo sapiens (Human), this protein is ADP-ribosylation factor-like protein 14 (ARL14).